The chain runs to 61 residues: Small ribosomal subunit protein uS14B (61 aa).

Zn(2+)-binding residues include cysteine 24, cysteine 27, cysteine 40, and cysteine 43.

The protein belongs to the universal ribosomal protein uS14 family. Zinc-binding uS14 subfamily. As to quaternary structure, part of the 30S ribosomal subunit. Contacts proteins S3 and S10. Zn(2+) is required as a cofactor.

In terms of biological role, binds 16S rRNA, required for the assembly of 30S particles and may also be responsible for determining the conformation of the 16S rRNA at the A site. In Staphylococcus saprophyticus subsp. saprophyticus (strain ATCC 15305 / DSM 20229 / NCIMB 8711 / NCTC 7292 / S-41), this protein is Small ribosomal subunit protein uS14B.